A 141-amino-acid chain; its full sequence is MNKSESENDSEYHKEYSESSDPEDTSFISLNKEIQNIRYIISDIKSQTVDVIQNLNNNVKEYNAFIHKFQNEYKTDKISVNSSVCHLESRVHILEHEIKSIKQDNQMLFEKMRDMLTDNSRLFGIIFDILKDLETNPGNKK.

The segment covering 1 to 17 (MNKSESENDSEYHKEYS) has biased composition (basic and acidic residues). Positions 1–24 (MNKSESENDSEYHKEYSESSDPED) are disordered. Positions 52–115 (IQNLNNNVKE…QMLFEKMRDM (64 aa)) form a coiled coil.

This is an uncharacterized protein from Acanthamoeba polyphaga (Amoeba).